The sequence spans 284 residues: Tropomyosin (284 aa).

Residues 1 to 284 (MDSIKKKMMA…DTTFAELTSF (284 aa)) adopt a coiled-coil conformation. The tract at residues 97 to 140 (EDFEQSSGRLTETSTKLDDASKAAEESERNRKTLETRSISDDER) is disordered. Over residues 101–110 (QSSGRLTETS) the composition is skewed to polar residues. The segment covering 111–140 (TKLDDASKAAEESERNRKTLETRSISDDER) has biased composition (basic and acidic residues).

This sequence belongs to the tropomyosin family. Homodimer.

In terms of biological role, tropomyosin, in association with the troponin complex, plays a central role in the calcium dependent regulation of muscle contraction. This is Tropomyosin from Echinococcus multilocularis (Fox tapeworm).